We begin with the raw amino-acid sequence, 485 residues long: Glutamate--tRNA ligase (485 aa).

Positions 11–21 match the 'HIGH' region motif; the sequence is PSPTGLLHIGN. The short motif at 255 to 259 is the 'KMSKS' region element; that stretch reads KLSKR. Lys-258 is a binding site for ATP.

Belongs to the class-I aminoacyl-tRNA synthetase family. Glutamate--tRNA ligase type 1 subfamily. Monomer.

It localises to the cytoplasm. The enzyme catalyses tRNA(Glu) + L-glutamate + ATP = L-glutamyl-tRNA(Glu) + AMP + diphosphate. Functionally, catalyzes the attachment of glutamate to tRNA(Glu) in a two-step reaction: glutamate is first activated by ATP to form Glu-AMP and then transferred to the acceptor end of tRNA(Glu). This chain is Glutamate--tRNA ligase, found in Streptococcus sanguinis (strain SK36).